We begin with the raw amino-acid sequence, 89 residues long: UPF0237 protein CPE1496 (89 aa).

Residues 4–84 form the ACT domain; it reads VITVVGKDKV…ISVQHEDIFN (81 aa).

Belongs to the UPF0237 family.

This is UPF0237 protein CPE1496 from Clostridium perfringens (strain 13 / Type A).